The sequence spans 528 residues: Tyrosine--tRNA ligase, cytoplasmic (528 aa).

L-tyrosine is bound at residue Tyr39. The 'HIGH' region motif lies at Thr44 to Tyr52. Residues Tyr166, Gln170, Asp173, and Gln188 each contribute to the L-tyrosine site. Positions Lys222–Ser226 match the 'KMSKS' region motif. Positions Lys242–Lys247 match the Nuclear localization signal motif. Residues Glu332–Glu362 form a disordered region. In terms of domain architecture, tRNA-binding spans Asp364–Tyr468.

This sequence belongs to the class-I aminoacyl-tRNA synthetase family. Homodimer.

It is found in the cytoplasm. The protein resides in the nucleus. The enzyme catalyses tRNA(Tyr) + L-tyrosine + ATP = L-tyrosyl-tRNA(Tyr) + AMP + diphosphate + H(+). Functionally, catalyzes the attachment of tyrosine to tRNA(Tyr) in a two-step reaction: tyrosine is first activated by ATP to form Tyr-AMP and then transferred to the acceptor end of tRNA(Tyr). This Xenopus laevis (African clawed frog) protein is Tyrosine--tRNA ligase, cytoplasmic (yars1).